A 313-amino-acid chain; its full sequence is Short-chain dehydrogenase/reductase family 9C member 7 (313 aa).

29 to 53 (FITGCDSGFGNLLAKQLVDRGMKVL) provides a ligand contact to NADP(+). Position 160 (S160) interacts with substrate. Y172 acts as the Proton acceptor in catalysis. S185 is subject to Phosphoserine.

The protein belongs to the short-chain dehydrogenases/reductases (SDR) family. As to expression, highly expressed in liver.

It is found in the cytoplasm. The catalysed reaction is a N-[omega-(9R,10R)-epoxy-(13R)-hydroxy-(11E)-octadecenoyloxy]acyl-beta-D-glucosyl-(1&lt;-&gt;1)-sphing-4E-enine + NAD(+) = a N-[omega-(9R,10R)-epoxy-13-oxo-(11E)-octadecenoyloxy]acyl-beta-D-glucosyl-(1&lt;-&gt;1)-sphing-4E-enine + NADH + H(+). It carries out the reaction a N-[omega-(9R,10R)-epoxy-(13R)-hydroxy-(11E)-octadecenoyloxy]-acylsphing-4E-enine + NAD(+) = a N-[omega-(9R,10R)-epoxy-13-oxo-(11E)-octadecenoyloxy]-acylsphing-4E-enine + NADH + H(+). Plays a crucial role in the formation of the epidermal permeability barrier. Catalyzes the NAD+-dependent dehydrogenation of the linoleate 9,10-trans-epoxy-11E-13-alcohol esterified in omega-O-acylceramides (such as in N-[omega-(9R,10R)-epoxy-(13R)-hydroxy-(11E)-octadecenoyloxy]-acylsphing-4E-enine) to the corresponding 13-ketone, the reactive moiety required for binding of epidermal ceramides to proteins. Displays weak conversion of all-trans-retinal to all-trans-retinol in the presence of NADH. Has apparently no steroid dehydrogenase activity. The protein is Short-chain dehydrogenase/reductase family 9C member 7 (Sdr9c7) of Mus musculus (Mouse).